The primary structure comprises 423 residues: tRNA-dihydrouridine(16/17) synthase [NAD(P)(+)] (423 aa).

Position 2 is an N-acetylthreonine (T2). Residues 35–37 (PMV) and Q92 contribute to the FMN site. The active-site Proton donor is the C121. Residues K160, H188, 223 to 225 (NGN), and 247 to 248 (AE) contribute to the FMN site. The interval 404-423 (KKRKADVPLESADKKKDVKA) is disordered. Positions 408–423 (ADVPLESADKKKDVKA) are enriched in basic and acidic residues.

The protein belongs to the Dus family. Dus1 subfamily. Monomer. FMN is required as a cofactor.

The catalysed reaction is 5,6-dihydrouridine(16) in tRNA + NADP(+) = uridine(16) in tRNA + NADPH + H(+). It catalyses the reaction 5,6-dihydrouridine(16) in tRNA + NAD(+) = uridine(16) in tRNA + NADH + H(+). It carries out the reaction 5,6-dihydrouridine(17) in tRNA + NAD(+) = uridine(17) in tRNA + NADH + H(+). The enzyme catalyses 5,6-dihydrouridine(17) in tRNA + NADP(+) = uridine(17) in tRNA + NADPH + H(+). The catalysed reaction is a 5,6-dihydrouridine in mRNA + NAD(+) = a uridine in mRNA + NADH + H(+). It catalyses the reaction a 5,6-dihydrouridine in mRNA + NADP(+) = a uridine in mRNA + NADPH + H(+). Its function is as follows. Catalyzes the synthesis of dihydrouridine, a modified base found in the D-loop of most tRNAs. Specifically modifies U16 and U17 in cytoplasmic tRNAs. Also able to mediate dihydrouridylation of some mRNAs, thereby affecting their translation. This Saccharomyces cerevisiae (strain ATCC 204508 / S288c) (Baker's yeast) protein is tRNA-dihydrouridine(16/17) synthase [NAD(P)(+)].